The sequence spans 1444 residues: RNA-directed RNA polymerase P1 (1444 aa).

The segment at 156–182 (SEEIQMDESQSDKRRRKKRMEKSRPVW) is disordered. Residues 690 to 897 (LGVGFATLYQ…KTVISHISGE (208 aa)) form the RdRp catalytic domain.

The protein belongs to the reoviridae RNA-directed RNA polymerase family.

It localises to the virion. It is found in the host cytoplasm. The catalysed reaction is RNA(n) + a ribonucleoside 5'-triphosphate = RNA(n+1) + diphosphate. Its function is as follows. RNA-directed RNA polymerase that is involved in both transcription and genome replication. Together with the capping enzyme P5 and protein P7, forms an enzyme complex positioned near the channels situated at each of the five-fold vertices of the core. The sequence is that of RNA-directed RNA polymerase P1 (S1) from Rice dwarf virus (isolate Fujian) (RDV).